The sequence spans 312 residues: Triacylglycerol lipase (312 aa).

Positions 1–25 (MNKIIILIALSLFSSSIWAGTSAHA) are cleaved as a signal peptide. Residues 37–228 (PIVLVHGLFG…VNGVRYYSWS (192 aa)) enclose the AB hydrolase-1 domain. Residue Leu44 participates in substrate binding. The active-site Nucleophile is Ser110. A substrate-binding site is contributed by His111. Cys212 and Cys262 are oxidised to a cystine. Position 238 (Asp238) interacts with Ca(2+). Residues Asp256 and His278 each act as charge relay system in the active site. Positions 280, 284, and 288 each coordinate Ca(2+).

The protein belongs to the AB hydrolase superfamily. Pseudomonas lipase family. As to quaternary structure, monomer. Ca(2+) serves as cofactor.

It localises to the secreted. It carries out the reaction a triacylglycerol + H2O = a diacylglycerol + a fatty acid + H(+). Catalyzes the hydrolysis of triacylglycerol. The sequence is that of Triacylglycerol lipase from Vibrio cholerae serotype O1 (strain ATCC 39315 / El Tor Inaba N16961).